A 350-amino-acid chain; its full sequence is Biotin synthase (350 aa).

Positions 38–256 constitute a Radical SAM core domain; the sequence is NHVQVSTLLS…IAIARIMMPQ (219 aa). Residues Cys53, Cys57, and Cys60 each coordinate [4Fe-4S] cluster. [2Fe-2S] cluster contacts are provided by Cys97, Cys128, Cys188, and Arg260.

The protein belongs to the radical SAM superfamily. Biotin synthase family. In terms of assembly, homodimer. [4Fe-4S] cluster is required as a cofactor. [2Fe-2S] cluster serves as cofactor.

The enzyme catalyses (4R,5S)-dethiobiotin + (sulfur carrier)-SH + 2 reduced [2Fe-2S]-[ferredoxin] + 2 S-adenosyl-L-methionine = (sulfur carrier)-H + biotin + 2 5'-deoxyadenosine + 2 L-methionine + 2 oxidized [2Fe-2S]-[ferredoxin]. It participates in cofactor biosynthesis; biotin biosynthesis; biotin from 7,8-diaminononanoate: step 2/2. Its function is as follows. Catalyzes the conversion of dethiobiotin (DTB) to biotin by the insertion of a sulfur atom into dethiobiotin via a radical-based mechanism. This is Biotin synthase from Vibrio parahaemolyticus serotype O3:K6 (strain RIMD 2210633).